The primary structure comprises 283 residues: Diaminopimelate epimerase (283 aa).

Asn-13 and Asn-65 together coordinate substrate. Cys-74 serves as the catalytic Proton donor. Substrate-binding positions include 75 to 76 (GN), Asn-196, and 214 to 215 (ER). Cys-223 serves as the catalytic Proton acceptor. 224-225 (GT) is a binding site for substrate.

The protein belongs to the diaminopimelate epimerase family. Homodimer.

It is found in the cytoplasm. It catalyses the reaction (2S,6S)-2,6-diaminopimelate = meso-2,6-diaminopimelate. It functions in the pathway amino-acid biosynthesis; L-lysine biosynthesis via DAP pathway; DL-2,6-diaminopimelate from LL-2,6-diaminopimelate: step 1/1. Its function is as follows. Catalyzes the stereoinversion of LL-2,6-diaminopimelate (L,L-DAP) to meso-diaminopimelate (meso-DAP), a precursor of L-lysine and an essential component of the bacterial peptidoglycan. This Alkaliphilus metalliredigens (strain QYMF) protein is Diaminopimelate epimerase.